The following is a 423-amino-acid chain: Histidine--tRNA ligase 2 (423 aa).

Belongs to the class-II aminoacyl-tRNA synthetase family. As to quaternary structure, homodimer.

Its subcellular location is the cytoplasm. It catalyses the reaction tRNA(His) + L-histidine + ATP = L-histidyl-tRNA(His) + AMP + diphosphate + H(+). The protein is Histidine--tRNA ligase 2 of Bacillus anthracis.